The sequence spans 188 residues: Elongation factor P (188 aa).

Residue Lys34 is modified to N6-(3,6-diaminohexanoyl)-5-hydroxylysine.

Belongs to the elongation factor P family. In terms of processing, may be beta-lysylated on the epsilon-amino group of Lys-34 by the combined action of EpmA and EpmB, and then hydroxylated on the C5 position of the same residue by EpmC (if this protein is present). Lysylation is critical for the stimulatory effect of EF-P on peptide-bond formation. The lysylation moiety may extend toward the peptidyltransferase center and stabilize the terminal 3-CCA end of the tRNA. Hydroxylation of the C5 position on Lys-34 may allow additional potential stabilizing hydrogen-bond interactions with the P-tRNA.

It is found in the cytoplasm. Its pathway is protein biosynthesis; polypeptide chain elongation. Involved in peptide bond synthesis. Alleviates ribosome stalling that occurs when 3 or more consecutive Pro residues or the sequence PPG is present in a protein, possibly by augmenting the peptidyl transferase activity of the ribosome. Modification of Lys-34 is required for alleviation. The chain is Elongation factor P from Hamiltonella defensa subsp. Acyrthosiphon pisum (strain 5AT).